Here is a 224-residue protein sequence, read N- to C-terminus: Urease accessory protein UreF (224 aa).

This sequence belongs to the UreF family. In terms of assembly, ureD, UreF and UreG form a complex that acts as a GTP-hydrolysis-dependent molecular chaperone, activating the urease apoprotein by helping to assemble the nickel containing metallocenter of UreC. The UreE protein probably delivers the nickel.

Its subcellular location is the cytoplasm. Its function is as follows. Required for maturation of urease via the functional incorporation of the urease nickel metallocenter. This Nitrosococcus oceani (strain ATCC 19707 / BCRC 17464 / JCM 30415 / NCIMB 11848 / C-107) protein is Urease accessory protein UreF.